An 89-amino-acid chain; its full sequence is Large ribosomal subunit protein uL29c (89 aa).

It belongs to the universal ribosomal protein uL29 family.

It localises to the plastid. The protein localises to the chloroplast. The polypeptide is Large ribosomal subunit protein uL29c (rpl29) (Trieres chinensis (Marine centric diatom)).